Reading from the N-terminus, the 275-residue chain is Large ribosomal subunit protein uL2 (275 aa).

Residues 224 to 257 are disordered; it reads AMNPIDHPHGGGEGRTAAGRDPVSPWGTPTKGFR.

It belongs to the universal ribosomal protein uL2 family. Part of the 50S ribosomal subunit. Forms a bridge to the 30S subunit in the 70S ribosome.

One of the primary rRNA binding proteins. Required for association of the 30S and 50S subunits to form the 70S ribosome, for tRNA binding and peptide bond formation. It has been suggested to have peptidyltransferase activity; this is somewhat controversial. Makes several contacts with the 16S rRNA in the 70S ribosome. The chain is Large ribosomal subunit protein uL2 from Burkholderia mallei (strain NCTC 10247).